The following is a 121-amino-acid chain: Non-structural protein 8 (121 aa).

A signal peptide spans 1-15 (MKLLIVFGLLTSVYC). The 103-residue stretch at 19–121 (ECSIQECCEN…HDVRVVLDFV (103 aa)) folds into the SARS ORF8 Ig-like domain. Disulfide bonds link C25/C90, C37/C102, and C61/C83.

This is Non-structural protein 8 from Bat coronavirus Rp3/2004 (BtCoV/Rp3/2004).